A 281-amino-acid chain; its full sequence is Probable thioesterase gloN (281 aa).

The disordered stretch occupies residues 207–233 (LDDGSNNSRDLNETSPTETSNDSETQA). The segment covering 210 to 232 (GSNNSRDLNETSPTETSNDSETQ) has biased composition (polar residues).

This sequence belongs to the AMT4 thioesterase family.

The protein operates within mycotoxin biosynthesis. Functionally, probable thioesterase; part of the gene cluster that mediates the biosynthesis of pneumocandins, lipohexapeptides of the echinocandin family that prevent fungal cell wall formation by non-competitive inhibition of beta-1,3-glucan synthase. The 10,12-dimethylmyristoyl side chain is synthesized by the reducing polyketide synthase gloL/GLPKS4. The thioesterase gloN/GLHYD exclusively interacts with gloL/GLPKS4 to maintain turnover of the polyketide side chain. The 10R,12S-dimethylmyristic acid is then transferred to the first thiolation domain of the nonribosomal peptide synthetase gloA/GLNRPS4 by the acyl-AMP ligase gloD/GLligase, followed by its acylation to L-ornithine to trigger elongation of the cyclic hexapeptide. L-ornithine, 4R-hydroxyl-L-proline (generated from L-proline by the dioxygenase gloF/GLOXY2), 3S-hydroxyl-L-homotyrosine (generated by gloG/GLHtyB, gloH/GLHtyA, gloI/GLHtyC, gloJ/GLHtyD and hydroxylated at C-3 by the dioxygenase gloM/GLOXY1), 3R-hydroxyl-L-glutamine (generated from L-glutamine probably by the dioxygenase gloE/GLOXY3) and 3S-hydroxyl-L-proline (generated from L-proline by the dioxygenase gloF/GLOXY2 to yield pneumocandin B0), or 3S-hydroxyl-4S-methyl-L-proline (generated from L-leucine by the dioxygenase gloC/GLOXY4 to yield pneumocandin A0) are sequentially added to the growing chain. The last C domain of gloA/GLNRPS4 is proposed to be responsible for cyclization by condensation to form the peptide bond between L-ornithine and 3S-hydroxyl-4S-methyl-L-proline (for pneumocandin A0) or 3S-hydroxyl-L-proline (for pneumocandin B0). Finally, the subsequent C-4 hydroxylation of 3S-hydroxyl-L-homotyrosine and L-ornithine dihydroxylation at C-4 and C-5 are performed by the cytochrome P450 monooxygenases gloP/GLP450-1 and gloO/GLP450-2, respectively. In Glarea lozoyensis (strain ATCC 20868 / MF5171), this protein is Probable thioesterase gloN.